The sequence spans 212 residues: Pyridoxine/pyridoxamine 5'-phosphate oxidase (212 aa).

Substrate-binding positions include Arg7–Tyr10 and Lys65. FMN is bound by residues Arg60 to Lys65, Phe75 to Thr76, Arg81, Lys82, and Gln104. 3 residues coordinate substrate: Tyr122, Arg126, and Ser130. FMN-binding positions include Gln139–Ser140 and Trp184. Arg190–His192 is a binding site for substrate. Arg194 lines the FMN pocket.

This sequence belongs to the pyridoxamine 5'-phosphate oxidase family. As to quaternary structure, homodimer. The cofactor is FMN.

It carries out the reaction pyridoxamine 5'-phosphate + O2 + H2O = pyridoxal 5'-phosphate + H2O2 + NH4(+). The catalysed reaction is pyridoxine 5'-phosphate + O2 = pyridoxal 5'-phosphate + H2O2. It functions in the pathway cofactor metabolism; pyridoxal 5'-phosphate salvage; pyridoxal 5'-phosphate from pyridoxamine 5'-phosphate: step 1/1. It participates in cofactor metabolism; pyridoxal 5'-phosphate salvage; pyridoxal 5'-phosphate from pyridoxine 5'-phosphate: step 1/1. Catalyzes the oxidation of either pyridoxine 5'-phosphate (PNP) or pyridoxamine 5'-phosphate (PMP) into pyridoxal 5'-phosphate (PLP). The polypeptide is Pyridoxine/pyridoxamine 5'-phosphate oxidase (Pseudoalteromonas translucida (strain TAC 125)).